Consider the following 61-residue polypeptide: MLNTFSLIGICLNSTLFSSSFFFGKLPEAYAFLNPIVDIMPVIPLFFFLLAFVWQAAVSFR.

The propeptide occupies Met1–Gly24. A helical transmembrane segment spans residues Ile36 to Ala56.

This sequence belongs to the PsbK family. PSII is composed of 1 copy each of membrane proteins PsbA, PsbB, PsbC, PsbD, PsbE, PsbF, PsbH, PsbI, PsbJ, PsbK, PsbL, PsbM, PsbT, PsbX, PsbY, PsbZ, Psb30/Ycf12, at least 3 peripheral proteins of the oxygen-evolving complex and a large number of cofactors. It forms dimeric complexes.

Its subcellular location is the plastid. The protein localises to the chloroplast thylakoid membrane. Its function is as follows. One of the components of the core complex of photosystem II (PSII). PSII is a light-driven water:plastoquinone oxidoreductase that uses light energy to abstract electrons from H(2)O, generating O(2) and a proton gradient subsequently used for ATP formation. It consists of a core antenna complex that captures photons, and an electron transfer chain that converts photonic excitation into a charge separation. This chain is Photosystem II reaction center protein K, found in Nicotiana tomentosiformis (Tobacco).